Consider the following 289-residue polypeptide: MASLKEVKGRIASVNNTRKITSAMKMVASAKLHKAQAAIENMLPYERRLNHILTNFLSADSEVESPFIVKREVKRVAIVVFASNTSLCGGFNANIIRHLTVILDEYKSLGMENVLLYPVGRKVAEGVKKLGFKAEGDFQHMADKPSYQEAAALAEDLMRRFLHRDIDKVELLYNHFRSTAVQVLTRETYLPIDLTQEKKEEDKGRIPDYIVEPSVDVVMGELLPKVLRMKMFTVLLDSNASEHAARTMAMQIATDNANDLLQDLTVMYNKSRQQAITNELLDIVGGSMA.

The protein belongs to the ATPase gamma chain family. F-type ATPases have 2 components, CF(1) - the catalytic core - and CF(0) - the membrane proton channel. CF(1) has five subunits: alpha(3), beta(3), gamma(1), delta(1), epsilon(1). CF(0) has three main subunits: a, b and c.

It is found in the cell inner membrane. Functionally, produces ATP from ADP in the presence of a proton gradient across the membrane. The gamma chain is believed to be important in regulating ATPase activity and the flow of protons through the CF(0) complex. The polypeptide is ATP synthase gamma chain (Phocaeicola vulgatus (strain ATCC 8482 / DSM 1447 / JCM 5826 / CCUG 4940 / NBRC 14291 / NCTC 11154) (Bacteroides vulgatus)).